Here is a 207-residue protein sequence, read N- to C-terminus: Vexin (207 aa).

The interval 55 to 102 (LELLPHRGDRRDPGDGRRFGRLQTARPPTAHPAKASARPVGISEPKTS) is disordered. Residues 58–72 (LPHRGDRRDPGDGRR) show a composition bias toward basic and acidic residues.

This sequence belongs to the vexin family.

The protein resides in the cell membrane. The protein localises to the nucleus. In terms of biological role, required for neurogenesis in the neural plate and retina. Strongly cooperates with neural bHLH factors to promote neurogenesis. This is Vexin from Pongo abelii (Sumatran orangutan).